We begin with the raw amino-acid sequence, 254 residues long: Protein PET122, mitochondrial (254 aa).

Residues 1-8 constitute a mitochondrion transit peptide; sequence MLTITKRL. The segment at 185 to 254 is essential for PET122 function; the sequence is QAAALALFGR…IKRRGFEINT (70 aa).

The protein localises to the mitochondrion inner membrane. Functionally, required for expression of the mitochondrial gene for cytochrome c oxidase subunit 3 (COX3). PET122 seems to work by directly interacting with the small ribosomal subunit to promote translation initiation on the COX3 mRNA. The polypeptide is Protein PET122, mitochondrial (PET122) (Saccharomyces cerevisiae (strain ATCC 204508 / S288c) (Baker's yeast)).